A 673-amino-acid polypeptide reads, in one-letter code: Gametogenetin (673 aa).

A disordered region spans residues 1–599; that stretch reads MGNVQSEPSA…TSTAGASNKG (599 aa). A compositionally biased stretch (basic and acidic residues) spans 14 to 30; the sequence is SRKEQASDRASDSRRTP. Low complexity predominate over residues 70–83; it reads ASSSPLPLTLELPS. An interaction with GGNBP1 region spans residues 125–506; that stretch reads RGLLEASHRG…APTPPSTLSP (382 aa). Residues 161–178 are compositionally biased toward pro residues; sequence PAPPPTPLEPRKQLPPAP. The segment covering 192-202 has biased composition (polar residues); that stretch reads LASSATSPTES. Positions 257 to 268 are enriched in low complexity; that stretch reads SASGPLAAKASP. At serine 399 the chain carries Phosphoserine. The segment covering 413–424 has biased composition (low complexity); sequence PRRPTPALLAPP. Residues 438-475 show a composition bias toward pro residues; it reads RPVPPSPQQIPPLPPPPPTPPATPPPAPPPTPQPPALP. Over residues 504 to 531 the composition is skewed to low complexity; sequence LSPTAAADQVPAATPATVTSQVPATATA. The interactions with ZNF403/GGNBP2 and OAZ3 stretch occupies residues 511-673; that stretch reads DQVPAATPAT…HYDLQATHST (163 aa). Residues 542–551 are compositionally biased toward basic residues; it reads TRTRRNKGPR.

Isoform 1 and isoform 3 interact with FANCL. Isoform 1 interacts with GGNBP1, ZNF403/GGNBP2 and OAZ3. Isoform 2 interacts with GGNBP1. As to expression, testis-specific. Specifically expressed in the germ cells and not in the somatic, Sertoli, or Leydig cells. In adult testis, expression starts in stage VIII pachytene spermatocytes, increases in stage IX and X pachytene spermatocytes, and culminates in stage XI diplotene spermatocytes and the meiotic cells in stage XII. Expression decreases slightly in step 1-3 spermatids, further decreases in step 4-11 spermatids, and is no longer detectable in step 12 spermatids and beyond. Isoform 2 is mainly expressed in testis.

It is found in the cytoplasm. Its subcellular location is the perinuclear region. It localises to the cytoplasmic vesicle. The protein resides in the nucleus. The protein localises to the nucleolus. In terms of biological role, may be involved in spermatogenesis. The chain is Gametogenetin (Ggn) from Mus musculus (Mouse).